Reading from the N-terminus, the 624-residue chain is 1-deoxy-D-xylulose-5-phosphate synthase (624 aa).

Thiamine diphosphate is bound by residues H80 and 121 to 123 (GHS). D152 is a Mg(2+) binding site. Thiamine diphosphate-binding positions include 153-154 (GA), N181, Y288, and E370. Position 181 (N181) interacts with Mg(2+).

This sequence belongs to the transketolase family. DXPS subfamily. Homodimer. It depends on Mg(2+) as a cofactor. Requires thiamine diphosphate as cofactor.

It carries out the reaction D-glyceraldehyde 3-phosphate + pyruvate + H(+) = 1-deoxy-D-xylulose 5-phosphate + CO2. Its pathway is metabolic intermediate biosynthesis; 1-deoxy-D-xylulose 5-phosphate biosynthesis; 1-deoxy-D-xylulose 5-phosphate from D-glyceraldehyde 3-phosphate and pyruvate: step 1/1. Functionally, catalyzes the acyloin condensation reaction between C atoms 2 and 3 of pyruvate and glyceraldehyde 3-phosphate to yield 1-deoxy-D-xylulose-5-phosphate (DXP). The chain is 1-deoxy-D-xylulose-5-phosphate synthase from Proteus mirabilis (strain HI4320).